The following is a 572-amino-acid chain: Protein misato homolog 1 (572 aa).

Belongs to the misato family.

Its subcellular location is the mitochondrion outer membrane. The protein localises to the cytoplasm. In terms of biological role, involved in the regulation of mitochondrial distribution and morphology. Required for mitochondrial fusion and mitochondrial network formation. This chain is Protein misato homolog 1 (MSTO1), found in Bos taurus (Bovine).